We begin with the raw amino-acid sequence, 247 residues long: Myelin-oligodendrocyte glycoprotein (247 aa).

The first 29 residues, Met-1 to Ala-29, serve as a signal peptide directing secretion. Topologically, residues Gly-30–Gly-154 are extracellular. An Ig-like V-type domain is found at Phe-32–Glu-145. The cysteines at positions 53 and 127 are disulfide-linked. Asn-60 carries N-linked (GlcNAc...) asparagine glycosylation. A helical membrane pass occupies residues Val-155–Phe-175. The Cytoplasmic portion of the chain corresponds to Leu-176 to Thr-210. A helical membrane pass occupies residues Leu-211 to Leu-231. The Extracellular segment spans residues His-232–Phe-247.

Belongs to the immunoglobulin superfamily. BTN/MOG family. In terms of assembly, homodimer. May form heterodimers between the different isoforms. As to quaternary structure, (Microbial infection) Interacts with rubella virus E2 glycoprotein. In terms of tissue distribution, found exclusively in the CNS, where it is localized on the surface of myelin and oligodendrocyte cytoplasmic membranes.

It localises to the cell membrane. Its function is as follows. Mediates homophilic cell-cell adhesion. Minor component of the myelin sheath. May be involved in completion and/or maintenance of the myelin sheath and in cell-cell communication. (Microbial infection) Acts as a receptor for rubella virus. The sequence is that of Myelin-oligodendrocyte glycoprotein (MOG) from Homo sapiens (Human).